The following is a 344-amino-acid chain: MARIIALDGAQGEGGGQILRSALSLSMITGQPFEMSGIRAGRAKPGLLRQHLTAVRAATEICGAQVNGDELGSQQLRFTPGPIRGGEYRFAIGSAGSCMLVLQTVLPALWFADGSSRVEVHGGTHNQAAPSADFICRVWEPLLARMGINQRTTLIKHGFYPAGGGAAATVVEPAASLRGLTLISRGETRRITAEALLASVPHHVGEREVATLEAHFPRAEKNVVALEGGCGPGNALSLMIQSEQLTELFAAFGVKGTSAEAVANQVAHEARRYLASPAAVGEHLADQLILPLALAGEGAFTVARASAHLLTNIAVVERFLPVTFNLEEAREMVQVMVSKKDSGS.

ATP contacts are provided by residues Gln-103 and 283-287; that span reads HLADQ. His-308 serves as the catalytic Tele-AMP-histidine intermediate.

Belongs to the RNA 3'-terminal cyclase family. Type 1 subfamily.

It is found in the cytoplasm. The enzyme catalyses a 3'-end 3'-phospho-ribonucleotide-RNA + ATP = a 3'-end 2',3'-cyclophospho-ribonucleotide-RNA + AMP + diphosphate. Catalyzes the conversion of 3'-phosphate to a 2',3'-cyclic phosphodiester at the end of RNA. The mechanism of action of the enzyme occurs in 3 steps: (A) adenylation of the enzyme by ATP; (B) transfer of adenylate to an RNA-N3'P to produce RNA-N3'PP5'A; (C) and attack of the adjacent 2'-hydroxyl on the 3'-phosphorus in the diester linkage to produce the cyclic end product. The biological role of this enzyme is unknown but it is likely to function in some aspects of cellular RNA processing. In Salmonella agona (strain SL483), this protein is RNA 3'-terminal phosphate cyclase.